Here is an 871-residue protein sequence, read N- to C-terminus: Translation initiation factor IF-2 (871 aa).

Disordered regions lie at residues 60 to 101 (KKNI…QEVK) and 184 to 203 (ESLKKKKKEKKSFVASKKES). Positions 61–72 (KNIKTPTAKKPK) are enriched in basic residues. Basic and acidic residues predominate over residues 73 to 101 (KENIKEQEKLNESEKKEPKKEEKLKQEVK). One can recognise a tr-type G domain in the interval 370–537 (TRAPVITIMG…IVLLQADILE (168 aa)). A G1 region spans residues 379–386 (GHVDHGKT). 379–386 (GHVDHGKT) contacts GTP. The segment at 404–408 (GITQH) is G2. Residues 425–428 (DTPG) form a G3 region. GTP is bound by residues 425 to 429 (DTPGH) and 479 to 482 (NKMD). The tract at residues 479-482 (NKMD) is G4. The interval 515–517 (SAK) is G5.

The protein belongs to the TRAFAC class translation factor GTPase superfamily. Classic translation factor GTPase family. IF-2 subfamily.

It is found in the cytoplasm. Functionally, one of the essential components for the initiation of protein synthesis. Protects formylmethionyl-tRNA from spontaneous hydrolysis and promotes its binding to the 30S ribosomal subunits. Also involved in the hydrolysis of GTP during the formation of the 70S ribosomal complex. This Campylobacter jejuni (strain RM1221) protein is Translation initiation factor IF-2.